Consider the following 198-residue polypeptide: 7-methyl-GTP pyrophosphatase (198 aa).

Asp-75 functions as the Proton acceptor in the catalytic mechanism.

It belongs to the Maf family. YceF subfamily. The cofactor is a divalent metal cation.

It is found in the cytoplasm. It catalyses the reaction N(7)-methyl-GTP + H2O = N(7)-methyl-GMP + diphosphate + H(+). Nucleoside triphosphate pyrophosphatase that hydrolyzes 7-methyl-GTP (m(7)GTP). May have a dual role in cell division arrest and in preventing the incorporation of modified nucleotides into cellular nucleic acids. The chain is 7-methyl-GTP pyrophosphatase from Nitrosospira multiformis (strain ATCC 25196 / NCIMB 11849 / C 71).